Consider the following 130-residue polypeptide: MKKLEDVGVLVARILMPILFITAGWGKITGYAGTQQYMEAMGVPGFMLPLVILLEFGGGLAILFGFLTRTTALFTAGFTLLTAFLFHSNFAEGVNSLMFMKNLTISGGFLLLAITGPGAYSIDRLLNKKW.

The Cytoplasmic segment spans residues 1–5 (MKKLE). Residues 6-26 (DVGVLVARILMPILFITAGWG) traverse the membrane as a helical segment. The Periplasmic portion of the chain corresponds to 27–45 (KITGYAGTQQYMEAMGVPG). A helical transmembrane segment spans residues 46-66 (FMLPLVILLEFGGGLAILFGF). The Cytoplasmic segment spans residues 67-70 (LTRT). The helical transmembrane segment at 71–91 (TALFTAGFTLLTAFLFHSNFA) threads the bilayer. The Periplasmic portion of the chain corresponds to 92-101 (EGVNSLMFMK). Residues 102-122 (NLTISGGFLLLAITGPGAYSI) traverse the membrane as a helical segment. The Cytoplasmic segment spans residues 123–130 (DRLLNKKW).

This sequence belongs to the DoxX family.

It is found in the cell inner membrane. The chain is Inner membrane protein YqjF (yqjF) from Escherichia coli (strain K12).